A 164-amino-acid chain; its full sequence is MHRDSCPLDCKVYVGNLGNNGNKTELERAFGYYGPLRSVWVARNPPGFAFVEFEDPRDAADAVRELDGRTLCGCRVRVELSNGEKRSRNRGPPPSWGRRPRDDYRRRSPPPRRRSPRRRSFSRSRSRSLSRDRRRERSLSRERNHKPSRSFSRSRSRSRSNERK.

Residue Met1 is modified to N-acetylmethionine. Residues 1–90 (MHRDSCPLDC…SNGEKRSRNR (90 aa)) form a sufficient for interaction with NXF1 and SRSP region. A Phosphoserine modification is found at Ser5. The 74-residue stretch at 10–83 (CKVYVGNLGN…CRVRVELSNG (74 aa)) folds into the RRM domain. Lys23 bears the N6-acetyllysine mark. The disordered stretch occupies residues 81 to 164 (SNGEKRSRNR…RSRSRSNERK (84 aa)). Residues 107–128 (RSPPPRRRSPRRRSFSRSRSRS) show a composition bias toward basic residues. The B-1 repeat unit spans residues 119 to 133 (RSFSRSRSRSLSRDR). A 2 X approximate repeats, basic region spans residues 119 to 164 (RSFSRSRSRSLSRDRRRERSLSRERNHKPSRSFSRSRSRSRSNERK). Over residues 129–142 (LSRDRRRERSLSRE) the composition is skewed to basic and acidic residues. A compositionally biased stretch (basic residues) spans 143–158 (RNHKPSRSFSRSRSRS). Residues 149 to 164 (RSFSRSRSRSRSNERK) form a B-2 repeat.

It belongs to the splicing factor SR family. As to quaternary structure, interacts with CPSF6. Interacts with RBMY1A1. Interacts with SREK1/SFRS12. Interacts with NXF1. Interacts with YTHDC1, leading to recruitment to RNA elements adjacent to m6A sites. Interacts with SRSP; increases SRSF3 binding to specific exons. In terms of processing, phosphorylated by CLK1, CLK2, CLK3 and CLK4. Extensively phosphorylated on serine residues in the RS domain.

It localises to the nucleus. Its subcellular location is the nucleus speckle. It is found in the cytoplasm. Functionally, splicing factor, which binds the consensus motif 5'-C[ACU][AU]C[ACU][AC]C-3' within pre-mRNA and promotes specific exons inclusion during alternative splicing. Interaction with YTHDC1, a RNA-binding protein that recognizes and binds N6-methyladenosine (m6A)-containing RNAs, promotes recruitment of SRSF3 to its mRNA-binding elements adjacent to m6A sites within exons. Also functions as an adapter involved in mRNA nuclear export. Binds mRNA which is thought to be transferred to the NXF1-NXT1 heterodimer for export (TAP/NXF1 pathway); enhances NXF1-NXT1 RNA-binding activity. Involved in nuclear export of m6A-containing mRNAs via interaction with YTHDC1: interaction with YTHDC1 facilitates m6A-containing mRNA-binding to both SRSF3 and NXF1, promoting mRNA nuclear export. The chain is Serine/arginine-rich splicing factor 3 (SRSF3) from Bos taurus (Bovine).